The primary structure comprises 61 residues: [Val1,Thr6]-bradykinyl-Gln,Ser (61 aa).

The first 22 residues, 1-22 (MSILKKSLFLVLFLGLVSFSIC), serve as a signal peptide directing secretion. The propeptide occupies 23 to 50 (EEEKREAEEEENEDEIEEQSEEKKRFEP). Residues 25–61 (EKREAEEEENEDEIEEQSEEKKRFEPVPPGFTPFRQS) are disordered. Residues 30–42 (EEEENEDEIEEQS) show a composition bias toward acidic residues. Pro-52 carries the 4-hydroxyproline; in form [Val1,Hyp2,Thr6]-Bradykinyl-Gln,Ser and [Val1,Hyp2,Thr6]-Bradykinin modification.

The protein belongs to the frog skin active peptide (FSAP) family. Bradykinin-related peptide subfamily. As to expression, expressed by the skin glands.

Its subcellular location is the secreted. Functionally, induces contraction of rat ileum smooth muscle (EC(50)=2.73 uM) but has no activity towards smooth muscle from tail artery, urinary bladder or uterus up to concentrations of 100 uM. Binds to both bradykinin receptor B1 (BDKRB1) and B2 (BDKRB2); the effect via BDKRB1 is stronger. In terms of biological role, [Val1,Hyp2,Thr6]-bradykinin-Gln,Ser: Induces contraction of rat ileum smooth muscle (EC(50)=710 nM) but has no activity towards smooth muscle from tail artery, urinary bladder or uterus up to concentrations of 100 uM. Binds to both bradykinin receptor B1 (BDKRB1) and B2 (BDKRB2); the effect via BDKRB1 is stronger. Induces contraction of guinea pig ileum smooth muscle. The polypeptide is [Val1,Thr6]-bradykinyl-Gln,Ser (Pithecopus hypochondrialis (Orange-legged leaf frog)).